The chain runs to 686 residues: Methionine--tRNA ligase (686 aa).

The 'HIGH' region signature appears at 15–25; it reads PYTNGPIHIGH. 4 residues coordinate Zn(2+): C147, C150, C160, and C163. The short motif at 336–340 is the 'KMSKS' region element; the sequence is KLSTS. T339 contacts ATP. The region spanning 584 to 686 is the tRNA-binding domain; sequence DFAKMDLRVG…AGVGNGEGIN (103 aa).

Belongs to the class-I aminoacyl-tRNA synthetase family. MetG type 1 subfamily. As to quaternary structure, homodimer. Zn(2+) serves as cofactor.

The protein localises to the cytoplasm. It carries out the reaction tRNA(Met) + L-methionine + ATP = L-methionyl-tRNA(Met) + AMP + diphosphate. Its function is as follows. Is required not only for elongation of protein synthesis but also for the initiation of all mRNA translation through initiator tRNA(fMet) aminoacylation. The protein is Methionine--tRNA ligase of Flavobacterium psychrophilum (strain ATCC 49511 / DSM 21280 / CIP 103535 / JIP02/86).